Reading from the N-terminus, the 158-residue chain is NAD(P)H-quinone oxidoreductase subunit J, chloroplastic (158 aa).

This sequence belongs to the complex I 30 kDa subunit family. NDH is composed of at least 16 different subunits, 5 of which are encoded in the nucleus.

Its subcellular location is the plastid. It is found in the chloroplast thylakoid membrane. The catalysed reaction is a plastoquinone + NADH + (n+1) H(+)(in) = a plastoquinol + NAD(+) + n H(+)(out). The enzyme catalyses a plastoquinone + NADPH + (n+1) H(+)(in) = a plastoquinol + NADP(+) + n H(+)(out). Functionally, NDH shuttles electrons from NAD(P)H:plastoquinone, via FMN and iron-sulfur (Fe-S) centers, to quinones in the photosynthetic chain and possibly in a chloroplast respiratory chain. The immediate electron acceptor for the enzyme in this species is believed to be plastoquinone. Couples the redox reaction to proton translocation, and thus conserves the redox energy in a proton gradient. This Cicer arietinum (Chickpea) protein is NAD(P)H-quinone oxidoreductase subunit J, chloroplastic.